The sequence spans 361 residues: Beta-hexosaminidase (361 aa).

Residues aspartate 69, arginine 77, arginine 144, and 174–175 (KH) contribute to the substrate site. Histidine 187 (proton donor/acceptor) is an active-site residue. The active-site Nucleophile is the aspartate 258.

It belongs to the glycosyl hydrolase 3 family. NagZ subfamily.

It localises to the cytoplasm. The catalysed reaction is Hydrolysis of terminal non-reducing N-acetyl-D-hexosamine residues in N-acetyl-beta-D-hexosaminides.. It participates in cell wall biogenesis; peptidoglycan recycling. Its function is as follows. Plays a role in peptidoglycan recycling by cleaving the terminal beta-1,4-linked N-acetylglucosamine (GlcNAc) from peptide-linked peptidoglycan fragments, giving rise to free GlcNAc, anhydro-N-acetylmuramic acid and anhydro-N-acetylmuramic acid-linked peptides. The polypeptide is Beta-hexosaminidase (Neisseria gonorrhoeae (strain ATCC 700825 / FA 1090)).